A 234-amino-acid chain; its full sequence is Ammonia monooxygenase gamma subunit (234 aa).

A signal peptide spans 1 to 20 (MRMIKFLLLAILLAPFVAHS). Positions 38–193 (ESLQRGAKGF…RFVADLVNYM (156 aa)) constitute a Cytochrome c domain. Heme c is bound by residues Cys51, Cys54, and His55. Residues 206-226 (ELGITVLLFLFGMLGLTYLLK) form a helical membrane-spanning segment.

It belongs to the cytochrome c family. The soluble ammonia monooxygenase is a nonamer composed of three alpha subunits (AmoA), three beta subunits (AmoB) and three gamma subunits (Cytochrome c1 PetC). Requires heme c as cofactor.

It localises to the cell membrane. The protein localises to the cytoplasm. Functionally, part of the ammonia monooxygenase complex, which catalyzes the oxidation of ammonia to hydroxylamine, the first reaction in the process of ammonia oxidation to nitrite. The polypeptide is Ammonia monooxygenase gamma subunit (Nitrosomonas europaea (strain ATCC 19718 / CIP 103999 / KCTC 2705 / NBRC 14298)).